Here is a 237-residue protein sequence, read N- to C-terminus: Ribosomal RNA small subunit methyltransferase G (237 aa).

S-adenosyl-L-methionine-binding positions include glycine 78, phenylalanine 83, 129–130 (AE), and arginine 148. Residues 218–237 (KKETPNKYPRKAGMPNKRPL) are disordered.

This sequence belongs to the methyltransferase superfamily. RNA methyltransferase RsmG family.

It localises to the cytoplasm. Specifically methylates the N7 position of a guanine in 16S rRNA. The sequence is that of Ribosomal RNA small subunit methyltransferase G from Streptococcus pneumoniae (strain JJA).